Reading from the N-terminus, the 249-residue chain is Suppressor of silencing P0 (249 aa).

The F-box-like domain maps to 63-67 (LPFHL).

Belongs to the polerovirus P0 protein family. In terms of assembly, interacts (via F-box-like domain) with host AGO1; this interaction targets AGO1 for degradation, and thereby suppresses the silencing function of the latter. Interacts (via F-box-like domain) with host ASK1 and ASK2 (SKP proteins); these interactions are essential for viral pathogenicity. Part of a SCF P0 complex composed of P0 and the host proteins SKP and CUL1.

Its function is as follows. Suppressor of RNA-mediated gene silencing, also known as post-transcriptional gene silencing (PTGS), a mechanism of plant viral defense that limits the accumulation of viral RNAs. The P0 protein suppresses local PTGS using its F-box-like domain to mediate destabilization and degradation of the AGO1 protein. The chain is Suppressor of silencing P0 from Turnip yellows virus (isolate FL-1) (TuYV).